The following is a 112-amino-acid chain: uncharacterized protein (112 aa).

Over residues 1–11 the composition is skewed to polar residues; it reads MAESVASSESL. The disordered stretch occupies residues 1–32; it reads MAESVASSESLPQMKPEEPESKKSPSREAIPK. Residues 15–31 show a composition bias toward basic and acidic residues; sequence KPEEPESKKSPSREAIP. A helical membrane pass occupies residues 81 to 101; sequence VVFIFMIAIMSMLVIGLVVCG.

The protein localises to the membrane. This is an uncharacterized protein from Encephalitozoon cuniculi (strain GB-M1) (Microsporidian parasite).